The sequence spans 655 residues: Forkhead box protein O1 (655 aa).

Disordered regions lie at residues 1-63 and 116-158; these read MAEA…SASA and GCLH…SRRN. The residue at position 24 (Thr24) is a Phosphothreonine; by PKB/AKT1 or PKB/AKT2 and SGK1. A compositionally biased stretch (low complexity) spans 33-63; that stretch reads SQSNSATSSPAPSGSAAANPDAAAGLPSASA. Pro residues predominate over residues 120–141; the sequence is PAPPQPPPPGPLSQHPPVPPAA. Residues 159–235 constitute a DNA-binding region (fork-head); it reads AWGNLSYADL…VQNEGTGKSS (77 aa). DNA-binding stretches follow at residues 211–218 and 234–237; these read NSIRHNLS and SSWW. Phosphoserine; by STK4/MST1 is present on residues Ser212, Ser218, Ser234, and Ser235. Residues 234–344 are disordered; it reads SSWWMLNPEG…QDDLGEGDVH (111 aa). 2 positions are modified to N6-acetyllysine: Lys245 and Lys248. Ser249 carries the phosphoserine; by CDK1 modification. Omega-N-methylarginine; by PRMT1 occurs at positions 251 and 253. Positions 251 to 253 match the Nuclear localization signal motif; sequence RRR. At Ser256 the chain carries Phosphoserine; by PKB/AKT1 and SGK1. 3 positions are modified to N6-acetyllysine: Lys262, Lys265, and Lys274. A compositionally biased stretch (basic residues) spans 264 to 275; sequence AKSRSRAAKKKA. Positions 283-563 are sufficient for interaction with NLK; sequence GAGDSPGSQF…RLTQVKTPVQ (281 aa). Residues Ser287 and Ser298 each carry the phosphoserine modification. Residues 309-326 show a composition bias toward polar residues; it reads NWSTFRPRTSSNASTISG. Ser319 bears the Phosphoserine; by PKB/AKT1 mark. Residue Ser322 is modified to Phosphoserine; by CK1 and SGK1. Ser325 is modified (phosphoserine; by CK1). Phosphoserine; by DYRK1A is present on Ser329. Thr333 carries the post-translational modification Phosphothreonine. The interval 363-459 is required for interaction with RUNX2; that stretch reads SEISNPENME…GGMSQYNCAP (97 aa). Residue Lys423 is modified to N6-acetyllysine. A Required for interaction with SIRT1 motif is present at residues 462–466; the sequence is LKELL. A compositionally biased stretch (polar residues) spans 507–534; that stretch reads YGSQASHNKMMNPSSHTHPGHAQQTSAV. The segment at 507 to 537 is disordered; that stretch reads YGSQASHNKMMNPSSHTHPGHAQQTSAVNGR.

In terms of assembly, interacts with LRPPRC. Interacts with RUNX2; the interaction inhibits RUNX2 transcriptional activity and mediates the IGF1/insulin-dependent BGLAP expression in osteoblasts Interacts with PPP2R1A; the interaction regulates the dephosphorylation of FOXO1 at Thr-24 and Ser-256 leading to its nuclear import. Interacts (acetylated form) with PPARG. Interacts with XBP1 isoform 2; this interaction is direct and leads to FOXO1 ubiquitination and degradation via the proteasome pathway. Interacts with NLK. Interacts with SIRT1; the interaction results in the deacetylation of FOXO1 leading to activation of FOXO1-mediated transcription of genes involved in DNA repair and stress resistance. Binds to CDK1. Interacts with the 14-3-3 proteins, YWHAG and YWHAZ; the interactions require insulin-stimulated phosphorylation on Thr-24, promote nuclear exit and loss of transcriptional activity. Interacts with SKP2; the interaction ubiquitinates FOXO1 leading to its proteasomal degradation. The interaction requires the presence of KRIT1. Interacts (via the C-terminal half) with ATF4 (via its DNA-binding domain); the interaction occurs in osteoblasts, regulates glucose homeostasis via suppression of beta-cell proliferation and subsequent decrease in insulin production. Interacts with PRMT1; the interaction methylates FOXO1, prevents PKB/AKT1 phosphorylation and retains FOXO1 in the nucleus. Interacts with EP300 and CREBBP; the interactions acetylate FOXO1. Interacts with SIRT2; the interaction is disrupted in response to oxidative stress or serum deprivation, leading to increased level of acetylated FOXO1, which promotes stress-induced autophagy by stimulating E1-like activating enzyme ATG7. Interacts (acetylated form) with ATG7; the interaction is increased in response to oxidative stress or serum deprivation and promotes the autophagic process leading to cell death. Interacts (via the Fork-head domain) with CEBPA; the interaction increases when FOXO1 is deacetylated. Interacts with WDFY2. Forms a complex with WDFY2 and AKT1. Interacts with CRY1. Interacts with PPIA/CYPA; the interaction promotes FOXO1 dephosphorylation, nuclear accumulation and transcriptional activity. Interacts with TOX4; FOXO1 is required for full induction of TOX4-dependent activity and the interaction is inhibited by insulin. Interacts (when phosphorylated on Ser-256) with STUB1/CHIP. In terms of processing, phosphorylation by NLK promotes nuclear export and inhibits the transcriptional activity. In response to growth factors, phosphorylation on Thr-24, Ser-256 and Ser-322 by PKB/AKT1 promotes nuclear export and inactivation of transactivational activity. Phosphorylation on Thr-24 is required for binding 14-3-3 proteins. Phosphorylation of Ser-256 decreases DNA-binding activity and promotes the phosphorylation of Thr-24 and Ser-319, permitting phosphorylation of Ser-322 and Ser-325, probably by CDK1, leading to nuclear exclusion and loss of function. Stress signals, such as response to oxygen or nitric oxide, attenuate the PKB/AKT1-mediated phosphorylation leading to nuclear retention. Phosphorylation of Ser-329 is independent of IGF1 and leads to reduced function. Dephosphorylated on Thr-24 and Ser-256 by PP2A in beta-cells under oxidative stress leading to nuclear retention. Phosphorylation of Ser-249 by CDK1 disrupts binding of 14-3-3 proteins leading to nuclear accumulation and has no effect on DNA-binding nor transcriptional activity. Phosphorylation by STK4/MST1 on Ser-212, upon oxidative stress, inhibits binding to 14-3-3 proteins and nuclear export. PPIA/CYPA promotes its dephosphorylation on Ser-256. Ubiquitinated by SKP2. Ubiquitination leads to proteasomal degradation. Ubiquitinated by STUB1/CHIP; when Ser-256 is phosphorylated. Post-translationally, methylation inhibits AKT1-mediated phosphorylation at Ser-256 and is increased by oxidative stress. In terms of processing, acetylated. Acetylation at Lys-262, Lys-265 and Lys-274 are necessary for autophagic cell death induction. Deacetylated by SIRT2 in response to oxidative stress or serum deprivation, thereby negatively regulating FOXO1-mediated autophagic cell death. Once in the nucleus, acetylated by CREBBP/EP300. Acetylation diminishes the interaction with target DNA and attenuates the transcriptional activity. It increases the phosphorylation at Ser-256. Deacetylation by SIRT1 results in reactivation of the transcriptional activity. Oxidative stress by hydrogen peroxide treatment appears to promote deacetylation and uncoupling of insulin-induced phosphorylation. By contrast, resveratrol acts independently of acetylation. Acetylated at Lys-423, promoting its localization to the nucleus and transcription factor activity. Deacetylation at Lys-423 by SIRT6, promotes its translocation into the cytoplasm, preventing its transcription factor activity. Deacetylation and subsequent inhibition by SIRT6 has different effects depending on cell types: it inhibits gluconeogenesis in hepatocytes, promotes glucose sensing in pancreatic beta-cells and regulates lipid catabolism in brown adipocytes. As to expression, expressed in umbilical endothelial cells (at protein level). Abundantly expressed in skeletal muscle and ovary, with lower expression in the heart, placenta, lung, liver, pancreas, spleen, testis and small intestine. Weakly expressed in the brain, thymus, prostate and mucosal lining of the colon.

It localises to the cytoplasm. The protein resides in the nucleus. Functionally, transcription factor that is the main target of insulin signaling and regulates metabolic homeostasis in response to oxidative stress. Binds to the insulin response element (IRE) with consensus sequence 5'-TT[G/A]TTTTG-3' and the related Daf-16 family binding element (DBE) with consensus sequence 5'-TT[G/A]TTTAC-3'. Activity suppressed by insulin. Main regulator of redox balance and osteoblast numbers and controls bone mass. Orchestrates the endocrine function of the skeleton in regulating glucose metabolism. Also acts as a key regulator of chondrogenic commitment of skeletal progenitor cells in response to lipid availability: when lipids levels are low, translocates to the nucleus and promotes expression of SOX9, which induces chondrogenic commitment and suppresses fatty acid oxidation. Acts synergistically with ATF4 to suppress osteocalcin/BGLAP activity, increasing glucose levels and triggering glucose intolerance and insulin insensitivity. Also suppresses the transcriptional activity of RUNX2, an upstream activator of osteocalcin/BGLAP. Acts as an inhibitor of glucose sensing in pancreatic beta cells by acting as a transcription repressor and suppressing expression of PDX1. In hepatocytes, promotes gluconeogenesis by acting together with PPARGC1A and CEBPA to activate the expression of genes such as IGFBP1, G6PC1 and PCK1. Also promotes gluconeogenesis by directly promoting expression of PPARGC1A and G6PC1. Important regulator of cell death acting downstream of CDK1, PKB/AKT1 and STK4/MST1. Promotes neural cell death. Mediates insulin action on adipose tissue. Regulates the expression of adipogenic genes such as PPARG during preadipocyte differentiation and, adipocyte size and adipose tissue-specific gene expression in response to excessive calorie intake. Regulates the transcriptional activity of GADD45A and repair of nitric oxide-damaged DNA in beta-cells. Required for the autophagic cell death induction in response to starvation or oxidative stress in a transcription-independent manner. Mediates the function of MLIP in cardiomyocytes hypertrophy and cardiac remodeling. Positive regulator of apoptosis in cardiac smooth muscle cells as a result of its transcriptional activation of pro-apoptotic genes. Regulates endothelial cell (EC) viability and apoptosis in a PPIA/CYPA-dependent manner via transcription of CCL2 and BCL2L11 which are involved in EC chemotaxis and apoptosis. The protein is Forkhead box protein O1 of Homo sapiens (Human).